Consider the following 813-residue polypeptide: Acyl-homoserine lactone acylase QuiP (813 aa).

Residues 1–26 (MAAPAFPPFRLRFATAATLLGMLGLA) form the signal peptide. Residue serine 262 is the Nucleophile of the active site.

It belongs to the peptidase S45 family. As to quaternary structure, heterodimer of an alpha subunit and a beta subunit processed from the same precursor.

Its subcellular location is the periplasm. It catalyses the reaction an N-acyl-L-homoserine lactone + H2O = L-homoserine lactone + a carboxylate. Its function is as follows. Catalyzes the deacylation of acyl-homoserine lactone (AHL or acyl-HSL), releasing homoserine lactone (HSL) and the corresponding fatty acid. Possesses a specificity for the degradation of long-chain acyl-HSLs (side chains of seven or more carbons in length). The sequence is that of Acyl-homoserine lactone acylase QuiP (quiP) from Pseudomonas putida (strain ATCC 47054 / DSM 6125 / CFBP 8728 / NCIMB 11950 / KT2440).